The primary structure comprises 239 residues: Ribosomal RNA small subunit methyltransferase G (239 aa).

S-adenosyl-L-methionine contacts are provided by residues Gly79, Phe84, 130–131 (AE), and Arg149.

It belongs to the methyltransferase superfamily. RNA methyltransferase RsmG family.

It localises to the cytoplasm. Specifically methylates the N7 position of a guanine in 16S rRNA. This Lactobacillus delbrueckii subsp. bulgaricus (strain ATCC BAA-365 / Lb-18) protein is Ribosomal RNA small subunit methyltransferase G.